A 573-amino-acid chain; its full sequence is Anti-Muellerian hormone type-2 receptor (573 aa).

The N-terminal stretch at 1 to 17 (MLGSLGLWALLPTAVEA) is a signal peptide. Residues 18-149 (PPNRRTCVFF…APGESIWMAL (132 aa)) are Extracellular-facing. Disulfide bonds link C55–C79 and C92–C109. An N-linked (GlcNAc...) asparagine glycan is attached at N66. N-linked (GlcNAc...) asparagine glycosylation is present at N119. A helical membrane pass occupies residues 150–170 (VLLGLFLLLLLLLGSIILALL). Topologically, residues 171-573 (QRKNYRVRGE…PQPACTLSPV (403 aa)) are cytoplasmic. Residues 203-518 (LCFSQVIREG…AHPQESHPFP (316 aa)) form the Protein kinase domain. ATP is bound by residues 209–217 (IREGGHAVV) and K230. Residue D333 is the Proton acceptor of the active site.

It belongs to the protein kinase superfamily. TKL Ser/Thr protein kinase family. TGFB receptor subfamily. In terms of assembly, interacts with type I receptor ACVR1. The cofactor is Mg(2+). Requires Mn(2+) as cofactor.

It localises to the membrane. It catalyses the reaction L-threonyl-[receptor-protein] + ATP = O-phospho-L-threonyl-[receptor-protein] + ADP + H(+). It carries out the reaction L-seryl-[receptor-protein] + ATP = O-phospho-L-seryl-[receptor-protein] + ADP + H(+). Functionally, on ligand binding, forms a receptor complex consisting of two type II and two type I transmembrane serine/threonine kinases. Type II receptors phosphorylate and activate type I receptors which autophosphorylate, then bind and activate SMAD transcriptional regulators. Receptor for anti-Muellerian hormone. The chain is Anti-Muellerian hormone type-2 receptor (AMHR2) from Homo sapiens (Human).